A 930-amino-acid polypeptide reads, in one-letter code: Isoleucine--tRNA ligase (930 aa).

The 'HIGH' region signature appears at 57-67 (PYANGNIHVGH). Glu-554 contacts L-isoleucyl-5'-AMP. The 'KMSKS' region motif lies at 595 to 599 (KMSKS). Lys-598 provides a ligand contact to ATP. The Zn(2+) site is built by Cys-888, Cys-891, Cys-908, and Cys-911.

Belongs to the class-I aminoacyl-tRNA synthetase family. IleS type 1 subfamily. In terms of assembly, monomer. Requires Zn(2+) as cofactor.

It localises to the cytoplasm. The enzyme catalyses tRNA(Ile) + L-isoleucine + ATP = L-isoleucyl-tRNA(Ile) + AMP + diphosphate. Catalyzes the attachment of isoleucine to tRNA(Ile). As IleRS can inadvertently accommodate and process structurally similar amino acids such as valine, to avoid such errors it has two additional distinct tRNA(Ile)-dependent editing activities. One activity is designated as 'pretransfer' editing and involves the hydrolysis of activated Val-AMP. The other activity is designated 'posttransfer' editing and involves deacylation of mischarged Val-tRNA(Ile). In Streptococcus pneumoniae (strain JJA), this protein is Isoleucine--tRNA ligase.